The chain runs to 95 residues: DNA-directed RNA polymerase subunit Rpo11 (95 aa).

Belongs to the archaeal Rpo11/eukaryotic RPB11/RPC19 RNA polymerase subunit family. Part of the RNA polymerase complex.

It is found in the cytoplasm. The catalysed reaction is RNA(n) + a ribonucleoside 5'-triphosphate = RNA(n+1) + diphosphate. Functionally, DNA-dependent RNA polymerase (RNAP) catalyzes the transcription of DNA into RNA using the four ribonucleoside triphosphates as substrates. The polypeptide is DNA-directed RNA polymerase subunit Rpo11 (Thermococcus sibiricus (strain DSM 12597 / MM 739)).